We begin with the raw amino-acid sequence, 330 residues long: Cathepsin S (330 aa).

The signal sequence occupies residues Met-1–Ala-17. Positions Glu-18–Thr-112 are cleaved as a propeptide — activation peptide. 2 N-linked (GlcNAc...) asparagine glycosylation sites follow: Asn-100 and Asn-110. Disulfide bonds link Cys-124–Cys-222, Cys-134–Cys-179, Cys-168–Cys-211, and Cys-271–Cys-319. Cys-137 is an active-site residue. Catalysis depends on residues His-277 and Asn-297.

Belongs to the peptidase C1 family. Monomer. As to expression, highest levels occur in the ileum followed by spleen, brain, thyroid, ovary and uterus. Low levels are found in the liver, kidney, jejunum and lung with lowest levels in the heart.

The protein resides in the lysosome. The protein localises to the secreted. It is found in the cytoplasmic vesicle. It localises to the phagosome. It catalyses the reaction Similar to cathepsin L, but with much less activity on Z-Phe-Arg-|-NHMec, and more activity on the Z-Val-Val-Arg-|-Xaa compound.. Thiol protease. Key protease responsible for the removal of the invariant chain from MHC class II molecules and MHC class II antigen presentation. The bond-specificity of this proteinase is in part similar to the specificities of cathepsin L. The chain is Cathepsin S (Ctss) from Rattus norvegicus (Rat).